A 317-amino-acid polypeptide reads, in one-letter code: Adenosine receptor A3 (317 aa).

Residues 1 to 14 (MPVNSTAVSLASVT) are Extracellular-facing. N4 is a glycosylation site (N-linked (GlcNAc...) asparagine). Residues 15–37 (YISVEILIGLCAIVGNVLVIWVV) form a helical membrane-spanning segment. Over 38 to 48 (KLNPSLQTTTF) the chain is Cytoplasmic. The chain crosses the membrane as a helical span at residues 49–72 (YFIVSLALADIAVGVLVMPLAIVI). The Extracellular segment spans residues 73 to 84 (SLGVTIHFYSCL). A disulfide bridge connects residues C83 and C165. A helical membrane pass occupies residues 85–106 (LMTCLLMIFTHASIMSLLAIAV). The Cytoplasmic segment spans residues 107 to 126 (DRYLRVKLTVRYRRVTTQRR). A helical transmembrane segment spans residues 127–148 (IWLALGLCWLVSFLVGLTPMFG). The Extracellular portion of the chain corresponds to 149–176 (WNMKLSSADKNLTFLPCQFRSVMRMDYM). The helical transmembrane segment at 177–197 (VYFSFFTWILIPLVVMCAIYF) threads the bilayer. Over 198 to 230 (DIFYVIRNRLSQNFSGSKETGAFYGREFKTAKS) the chain is Cytoplasmic. The helical transmembrane segment at 231–254 (LSLVLFLFALSWLPLSIINCIIYF) threads the bilayer. The Extracellular portion of the chain corresponds to 255–260 (NGEVPQ). The helical transmembrane segment at 261 to 283 (IVLYLGILLSHANSMMNPIVYAY) threads the bilayer. The Cytoplasmic segment spans residues 284 to 317 (KIKKFKETYLLILKACVICQPSKSMDPSIEQTSE). C302 is lipidated: S-palmitoyl cysteine.

This sequence belongs to the G-protein coupled receptor 1 family. In terms of processing, phosphorylation on Thr-315 and Ser-316 may be crucial for rapid desensitization. Phosphorylation on Thr-315 may be necessary for phosphorylation on Ser-316 to occur.

It localises to the cell membrane. Functionally, receptor for adenosine. The activity of this receptor is mediated by G proteins which inhibits adenylyl cyclase. The chain is Adenosine receptor A3 (ADORA3) from Bos taurus (Bovine).